A 337-amino-acid polypeptide reads, in one-letter code: MAGLWRSNSTLDVERGRNRTQTETVQTVPRQAQGILELLSSPAAREALQGSDFARWRGVPVSPAGGYFELAPLRSVNTFARGLRSVFGGSTSRREAYIPQHGFYRLNYVLVAVVPHVEHSDPGEVTVQLVENTNPTRAVDGQELTARLADGSFVFAAAPTYDIVLEQAPILVEGESAGVVQRMFGIRTSVSGSLTTGSVVSVYPIWSAEFPIQGATFNHVAPSIVHIDRFNRSVAFEIDVLRRRFSLMRPLHLARSRESFQVGRMSLDVARPSVVRPPPVDPQAEGGIHVNSPTSEQSQGEDRVPRAGLASGTSVGEGANHEFLSGAVKSTAPVRQT.

Polar residues predominate over residues 1–11 (MAGLWRSNSTL). Disordered stretches follow at residues 1 to 24 (MAGL…QTET) and 273 to 337 (SVVR…VRQT).

It is found in the host cell junction. The protein localises to the host plasmodesma. In terms of biological role, transports viral genome to neighboring plant cells directly through plasmosdesmata, without any budding. The movement protein allows efficient cell to cell propagation, by bypassing the host cell wall barrier. Acts by forming a tubular structure at the host plasmodesmata, enlarging it enough to allow free passage of virion capsids. This chain is Movement protein, found in Olive latent virus 2 (isolate Italy) (OLV-2).